The chain runs to 624 residues: Ceramide transfer protein (624 aa).

Over residues 1–11 (MSDNQSWNSSG) the composition is skewed to polar residues. A disordered region spans residues 1–24 (MSDNQSWNSSGSEEDPETESGPPV). The region spanning 23 to 117 (PVERCGVLSK…WIDAIEQHKT (95 aa)) is the PH domain. The residue at position 126 (S126) is a Phosphoserine. S132 is subject to Phosphoserine; by PKD. The residue at position 135 (S135) is a Phosphoserine. Positions 263–303 (IELMVKREDSWQKRLDKETEKKRRTEEAYKNAMTELKKKSH) form a coiled coil. Phosphoserine is present on S315. An FFAT motif is present at residues 321–327 (EFFDAVE). At Y372 the chain carries Phosphotyrosine. S373, S377, and S380 each carry phosphoserine. One can recognise an START domain in the interval 389 to 618 (DVHRFSSQVE…FTSYVQEKTA (230 aa)). Positions 472, 493, 530, and 579 each coordinate an N-acylsphing-4-enine.

Interacts with VAPA and VAPB. Interaction with VAPB is less efficient than with VAPA. Interacts (via FFAT motif) with MOSPD2 (via MSP domain). Post-translationally, phosphorylation on Ser-132 decreases the affinity toward phosphatidylinositol 4-phosphate at Golgi membranes and reduces ceramide transfer activity. Inactivated by hyperphosphorylation of serine residues by CSNK1G2/CK1 that triggers dissociation from the Golgi complex, thus down-regulating ER-to-Golgi transport of ceramide and sphingomyelin synthesis. Widely expressed.

It is found in the cytoplasm. Its subcellular location is the golgi apparatus. The protein localises to the endoplasmic reticulum. The catalysed reaction is N-hexadecanoylsphing-4-enine(in) = N-hexadecanoylsphing-4-enine(out). Functionally, shelters ceramides and diacylglycerol lipids inside its START domain and mediates the intracellular trafficking of ceramides and diacylglycerol lipids in a non-vesicular manner. This Homo sapiens (Human) protein is Ceramide transfer protein.